A 665-amino-acid chain; its full sequence is MDRPAAAAAAGCEGGGGPNPGPAGGRRPPRAAGGATAGSRQPSVETLDSPTGSHVEWCKQLIAATISSQISGSVTSENVSRDYKALRDGNKLAQMEEAPLFPGESIKAIVKDVMYICPFMGAVSGTLTVTDFKLYFKNVERDPHFILDVPLGVISRVEKIGAQSHGDNSCGIEIVCKDMRNLRLAYKQEEQSKLGIFENLNKHAFPLSNGQALFAFSYKEKFPINGWKVYDPVSEYKRQGLPNESWKISKINSNYEFCDTYPAIIVVPTSVKDDDLSKVAAFRAKGRVPVLSWIHPESQATITRCSQPLVGPNDKRCKEDEKYLQTIMDANAQSHKLIIFDARQNSVADTNKTKGGGYESESAYPNAELVFLEIHNIHVMRESLRKLKEIVYPSIDEARWLSNVDGTHWLEYIRMLLAGAVRIADKIESGKTSVVVHCSDGWDRTAQLTSLAMLMLDSYYRTIKGFETLVEKEWISFGHRFALRVGHGNDNHADADRSPIFLQFVDCVWQMTRQFPSAFEFNELFLITILDHLYSCLFGTFLCNCEQQRFKEDVYTKTISLWSYINSQLDEFSNPFFVNYENHVLYPVASLSHLELWVNYYVRWNPRMRPQMPIHQNLKELLAVRAELQKRVEGLQREVATRAVSSSSERGSSPSHSATSVHTSV.

Residue Met1 is modified to N-acetylmethionine. The span at 1–11 (MDRPAAAAAAG) shows a compositional bias: low complexity. Positions 1-51 (MDRPAAAAAAGCEGGGGPNPGPAGGRRPPRAAGGATAGSRQPSVETLDSPT) are disordered. A compositionally biased stretch (gly residues) spans 12–24 (CEGGGGPNPGPAG). The span at 39-51 (SRQPSVETLDSPT) shows a compositional bias: polar residues. Phosphoserine occurs at positions 43 and 49. The 72-residue stretch at 90–161 (NKLAQMEEAP…GVISRVEKIG (72 aa)) folds into the GRAM domain. Residues 226–601 (GWKVYDPVSE…SHLELWVNYY (376 aa)) form the Myotubularin phosphatase domain. A 1,2-diacyl-sn-glycero-3-phospho-(1D-myo-inositol-3-phosphate)-binding residues include Asn351, Asn376, and Ile377. The active-site Phosphocysteine intermediate is the Cys438. A 1,2-diacyl-sn-glycero-3-phospho-(1D-myo-inositol-3-phosphate) is bound by residues Ser439, Asp440, Gly441, Trp442, Asp443, Arg444, and Arg484. Ser439 serves as a coordination point for phosphate. Phosphate-binding residues include Gly441, Trp442, Asp443, and Arg444. The required for dimerization stretch occupies residues 608–665 (MRPQMPIHQNLKELLAVRAELQKRVEGLQREVATRAVSSSSERGSSPSHSATSVHTSV). The interval 642 to 665 (RAVSSSSERGSSPSHSATSVHTSV) is disordered. Residues 645 to 657 (SSSSERGSSPSHS) are compositionally biased toward low complexity.

Belongs to the protein-tyrosine phosphatase family. Non-receptor class myotubularin subfamily. As to quaternary structure, homodimer.

It is found in the cell membrane. The protein resides in the cytoplasm. It carries out the reaction a 1,2-diacyl-sn-glycero-3-phospho-(1D-myo-inositol-3-phosphate) + H2O = a 1,2-diacyl-sn-glycero-3-phospho-(1D-myo-inositol) + phosphate. The catalysed reaction is 1,2-dioctanoyl-sn-glycero-3-phospho-(1-D-myo-inositol-3-phosphate) + H2O = 1,2-dioctanoyl-sn-glycero-3-phospho-(1D-myo-inositol) + phosphate. The enzyme catalyses a 1,2-diacyl-sn-glycero-3-phospho-(1D-myo-inositol-3,5-bisphosphate) + H2O = a 1,2-diacyl-sn-glycero-3-phospho-(1D-myo-inositol-5-phosphate) + phosphate. Functionally, lipid phosphatase that specifically dephosphorylates the D-3 position of phosphatidylinositol 3-phosphate, generating phosphatidylinositol. Could also dephosphorylate phosphatidylinositol 3,5-bisphosphate to produce phosphatidylinositol 5-phosphate. This is Phosphatidylinositol-3-phosphate phosphatase MTMR1 from Homo sapiens (Human).